A 350-amino-acid chain; its full sequence is MRQLAELLTDLLGPVPTMFLWVIVSFAFFRALQFIVRWYLFGKWTWPNFNFFDIRNRIRRRRRGGQEAENTENPPENEAEAGEQVEQEPEPDSRDLSAIPPNKKWRISNECVSLFHSVISGLWAAYALLYYKQLVQDLVNYRCDVAINLVLMSAGYLFHDLVDLLVNEQSARIIELLFHHVVVLSAFAVTMFFNRFLGVVVFGLLMELNSIFLHSRSLLNLYGVDKKSPSFRIIALLNMVTLFAFRLCVSAYLVYFVVVSIPDLEWYVSIINGLVIASLASTNTVLTYRLLAADGLLGSRRTRRTPAATAETQVGDVESGPLRTQVEDEDHHTIGVQTIHGTTEDATQTV.

The chain crosses the membrane as a helical span at residues 9–29 (TDLLGPVPTMFLWVIVSFAFF). The tract at residues 65-100 (GQEAENTENPPENEAEAGEQVEQEPEPDSRDLSAIP) is disordered. Over residues 75 to 90 (PENEAEAGEQVEQEPE) the composition is skewed to acidic residues. The TLC domain maps to 102 to 279 (NKKWRISNEC…IINGLVIASL (178 aa)). Transmembrane regions (helical) follow at residues 111-131 (CVSL…LLYY), 145-165 (VAIN…VDLL), 173-193 (IIEL…TMFF), 195-215 (RFLG…FLHS), 229-249 (PSFR…RLCV), and 270-292 (IING…RLLA).

Ubiquitously expressed.

The protein resides in the cell membrane. Its function is as follows. Regulates the composition and fluidity of the plasma membrane. Inhibits the incorporation of membrane-fluidizing phospholipids containing omega-3 long-chain polyunsaturated fatty acids (LCPUFA) and thereby promotes membrane rigidity. Does not appear to have any effect on LCPUFA synthesis. The sequence is that of TLC domain-containing protein fld-1 from Caenorhabditis elegans.